Here is a 40-residue protein sequence, read N- to C-terminus: Acyl-CoA-binding protein 2 (40 aa).

The span at 1–15 (ALKEEFEEHAEKAKT) shows a compositional bias: basic and acidic residues. A disordered region spans residues 1–25 (ALKEEFEEHAEKAKTLPENTSSENK). The 39-residue stretch at 2 to 40 (LKEEFEEHAEKAKTLPENTSSENKLTLYGLYKQATVGNV) folds into the ACB domain.

It belongs to the ACBP family.

The protein localises to the cytoplasm. In terms of biological role, binds medium- and long-chain acyl-CoA esters with very high affinity and may function as an intracellular carrier of acyl-CoA esters. In Digitalis lanata (Grecian foxglove), this protein is Acyl-CoA-binding protein 2.